A 138-amino-acid chain; its full sequence is Abscisic stress-ripening protein 5 (138 aa).

A compositionally biased stretch (basic residues) spans 1 to 13; sequence MAEEKHHHHLFHH. Disordered regions lie at residues 1–27 and 106–138; these read MAEEKHHHHLFHHKKDDEPATGVDSYG and GAGGYAFHEHHEKKKDHKSAEESTGEKKHHLFG.

This sequence belongs to the abscisic acid and water stress-induced protein family.

Its subcellular location is the nucleus. It localises to the cytoplasm. Involved in tolerance to aluminum. Regulates the expression of different genes that collectively contribute to the protection of the cell in response to aluminum stress. This chain is Abscisic stress-ripening protein 5, found in Oryza sativa subsp. indica (Rice).